A 417-amino-acid polypeptide reads, in one-letter code: Serine hydroxymethyltransferase (417 aa).

Residues leucine 121 and 125–127 (GHL) contribute to the (6S)-5,6,7,8-tetrahydrofolate site. Lysine 229 is modified (N6-(pyridoxal phosphate)lysine). 354–356 (SPF) serves as a coordination point for (6S)-5,6,7,8-tetrahydrofolate.

Belongs to the SHMT family. In terms of assembly, homodimer. It depends on pyridoxal 5'-phosphate as a cofactor.

It localises to the cytoplasm. The catalysed reaction is (6R)-5,10-methylene-5,6,7,8-tetrahydrofolate + glycine + H2O = (6S)-5,6,7,8-tetrahydrofolate + L-serine. It functions in the pathway one-carbon metabolism; tetrahydrofolate interconversion. It participates in amino-acid biosynthesis; glycine biosynthesis; glycine from L-serine: step 1/1. Catalyzes the reversible interconversion of serine and glycine with tetrahydrofolate (THF) serving as the one-carbon carrier. This reaction serves as the major source of one-carbon groups required for the biosynthesis of purines, thymidylate, methionine, and other important biomolecules. Also exhibits THF-independent aldolase activity toward beta-hydroxyamino acids, producing glycine and aldehydes, via a retro-aldol mechanism. This is Serine hydroxymethyltransferase from Stutzerimonas stutzeri (strain A1501) (Pseudomonas stutzeri).